We begin with the raw amino-acid sequence, 236 residues long: Leucyl/phenylalanyl-tRNA--protein transferase (236 aa).

The protein belongs to the L/F-transferase family.

It localises to the cytoplasm. The enzyme catalyses N-terminal L-lysyl-[protein] + L-leucyl-tRNA(Leu) = N-terminal L-leucyl-L-lysyl-[protein] + tRNA(Leu) + H(+). It carries out the reaction N-terminal L-arginyl-[protein] + L-leucyl-tRNA(Leu) = N-terminal L-leucyl-L-arginyl-[protein] + tRNA(Leu) + H(+). The catalysed reaction is L-phenylalanyl-tRNA(Phe) + an N-terminal L-alpha-aminoacyl-[protein] = an N-terminal L-phenylalanyl-L-alpha-aminoacyl-[protein] + tRNA(Phe). Its function is as follows. Functions in the N-end rule pathway of protein degradation where it conjugates Leu, Phe and, less efficiently, Met from aminoacyl-tRNAs to the N-termini of proteins containing an N-terminal arginine or lysine. The polypeptide is Leucyl/phenylalanyl-tRNA--protein transferase (Shewanella loihica (strain ATCC BAA-1088 / PV-4)).